The primary structure comprises 373 residues: MAAQARTPRSRILGCSSMLRFLRSLVGSKGSSKSSNRPLNRSQPSSSPEQDVVSPTMGHQGGCGRKETRPRVLSATSSNGKREPRPRVLSAAPSNQRLRDASGLGTGDTGSQTLTSKDVLKLRAQGVEVTSVPTRGTWEVLEHLPEKKGEEGEPAGEVSGASDRAHFGQALEAEQGCLQWVSGPMVLPPEAFIKEEEDEHCLIDFGDLRLSSCKVGSTPWNYLLGLYKQLQKSAMTKAQRPDADAPQFALKDSSPTEERGEREEAVDESSLKWCAPRASSDDSNLKWCAPRNSTYQSPLQKTFRSTDTVGFVESELKKILAVQREARLWKVGNPEGRELLTQPDITLEEAGMVDGQHLLLEEMDEMGNWPPPE.

Disordered regions lie at residues 26 to 113 (VGSK…GSQT) and 237 to 268 (KAQRPDADAPQFALKDSSPTEERGEREEAVDE). A compositionally biased stretch (polar residues) spans 36-49 (NRPLNRSQPSSSPE). The required for induction of mitochondrial fragmentation stretch occupies residues 226–373 (LYKQLQKSAM…DEMGNWPPPE (148 aa)). The segment covering 254 to 263 (SPTEERGERE) has biased composition (basic and acidic residues). The tract at residues 301–373 (KTFRSTDTVG…DEMGNWPPPE (73 aa)) is interaction with GGN.

Interacts with CCDC159. Interacts with GGN.

It is found in the cytoplasm. Its subcellular location is the membrane. The protein resides in the golgi apparatus. The protein localises to the mitochondrion intermembrane space. Its function is as follows. Induces mitochondrial fragmentation, possibly by promoting DNM1L-dependent fission and may play a role in mitochondrial morphogenesis during spermatogenesis. This is Gametogenetin-binding protein 1 (Ggnbp1) from Rattus norvegicus (Rat).